Here is a 321-residue protein sequence, read N- to C-terminus: Serine protease 52 (321 aa).

Positions 1–27 are cleaved as a signal peptide; that stretch reads MKRWKDRRTGLLLPLVLLLFGACSSLA. In terms of domain architecture, Peptidase S1 spans 56 to 287; that stretch reads IVGGKPANIL…YVRWISKQTA (232 aa). Cys81 and Cys97 are joined by a disulfide. Residues His96 and Asp142 each act as charge relay system in the active site. An N-linked (GlcNAc...) asparagine glycan is attached at Asn153. 3 disulfides stabilise this stretch: Cys175–Cys242, Cys208–Cys221, and Cys232–Cys263. The active-site Charge relay system is the Ser236. The helical transmembrane segment at 300 to 320 threads the bilayer; the sequence is ACPLVLSCRAILFLYFVMFLL.

Belongs to the peptidase S1 family.

It is found in the membrane. In terms of biological role, probable serine protease. The chain is Serine protease 52 (Prss52) from Mus musculus (Mouse).